We begin with the raw amino-acid sequence, 463 residues long: Argininosuccinate lyase (463 aa).

This sequence belongs to the lyase 1 family. Argininosuccinate lyase subfamily.

It is found in the cytoplasm. It catalyses the reaction 2-(N(omega)-L-arginino)succinate = fumarate + L-arginine. It participates in amino-acid biosynthesis; L-arginine biosynthesis; L-arginine from L-ornithine and carbamoyl phosphate: step 3/3. The sequence is that of Argininosuccinate lyase from Staphylococcus epidermidis (strain ATCC 35984 / DSM 28319 / BCRC 17069 / CCUG 31568 / BM 3577 / RP62A).